Consider the following 361-residue polypeptide: Probable cysteine protease RD19B (361 aa).

The first 24 residues, 1-24 (MDYHLRVLFSVSLIFVFVSVSVCG), serve as a signal peptide directing secretion. The propeptide at 25–131 (DEDVLIRQVV…NQAPILPTQN (107 aa)) is activation peptide. 2 disulfide bridges follow: cysteine 153-cysteine 203 and cysteine 187-cysteine 237. Residue cysteine 156 is part of the active site. Asparagine 250 carries an N-linked (GlcNAc...) asparagine glycan. Cysteines 293 and 347 form a disulfide. Active-site residues include histidine 299 and asparagine 326.

The protein belongs to the peptidase C1 family.

Its subcellular location is the lytic vacuole. Functionally, probable thiol protease. The polypeptide is Probable cysteine protease RD19B (Arabidopsis thaliana (Mouse-ear cress)).